Here is a 259-residue protein sequence, read N- to C-terminus: Protein CDI (259 aa).

Residues 236–259 are a coiled coil; that stretch reads FADLWLNEMEEYNKENKKEADNAK.

Mostly expressed in pollen grains and pollen tubes, and, at low levels, in seedlings, roots, stems, leaves, flowers and siliques.

It is found in the cytoplasm. The protein resides in the cytosol. Probable nucleotide-diphospho-sugar transferase required for pollen germination and tube growth. The chain is Protein CDI from Arabidopsis thaliana (Mouse-ear cress).